The sequence spans 86 residues: UPF0213 protein OB0043 (86 aa).

The GIY-YIG domain maps to 3–80 (EQHYVYILRC…LPRFEKLKLI (78 aa)).

This sequence belongs to the UPF0213 family.

This Oceanobacillus iheyensis (strain DSM 14371 / CIP 107618 / JCM 11309 / KCTC 3954 / HTE831) protein is UPF0213 protein OB0043.